Consider the following 486-residue polypeptide: B-type cell cycle switch protein ccs52B (486 aa).

Positions 24–36 (RLETLSTPPSSAS) match the PEST motif motif. The segment covering 27–36 (TLSTPPSSAS) has biased composition (polar residues). A disordered region spans residues 27–57 (TLSTPPSSASPRAISNLSSTPSPSKSSKCSD). Residues 41–53 (SNLSSTPSPSKSS) are compositionally biased toward low complexity. The C-box signature appears at 57 to 63 (DRFIPCR). The short motif at 87–98 (AYNRLLKSELFG) is the CSM motif element. WD repeat units follow at residues 177–214 (QDDF…VTKL), 218–257 (GPYD…KVRT), 260–297 (GHQT…DFIG), 301–340 (GHKS…PTLR), 343–385 (EHTA…QLNS), 387–428 (DTGS…KVAT), and 431–470 (GHSM…KTPA).

It belongs to the WD repeat CDC20/Fizzy family. As to expression, mostly expressed in shoot apices and, to a lower extent, in roots, especially in root tips, and in hypocotyls. Expressed in nodulation-competent root zone but not in the nodules.

The protein operates within protein modification; protein ubiquitination. Functionally, component of the anaphase promoting complex/cyclosome (APC/C), a cell cycle-regulated E3 ubiquitin-protein ligase complex that controls progression through mitosis and the G1 phase of the cell cycle. In Medicago truncatula (Barrel medic), this protein is B-type cell cycle switch protein ccs52B.